A 318-amino-acid polypeptide reads, in one-letter code: MAPESLAEVPGCNCFWYLGVVAATWWGLRAAWCLLNGARVWVLGSGAQVGPTIGKWAVVTGATDGIGKAYAEELARRGMNIVLISRSPEKLEEAAIHIKQKFKVETKIIAADFGKPTEIYERIEAGLRDLEIGVLVNNVGISYEYPEYFLEIPDLENTLDKMININIMSVCQMTRLVLPGMLGRGKGVVLNISSASGMYPVPLLTVYSATKAFVDFFSRGLHAEYRSKGVTVQSVLPFFVATKLAKIRKPTWDKPSPETYVRSALNTVGLQTQTNGYLPHAITGWISTSLVPVSAAISMGMKMNKGLRARFLKKAKQN.

Residues 15-35 (FWYLGVVAATWWGLRAAWCLL) form a helical membrane-spanning segment. Residue 54-83 (GKWAVVTGATDGIGKAYAEELARRGMNIVL) coordinates NADP(+). The next 2 helical transmembrane spans lie at 187–207 (GVVLNISSASGMYPVPLLTVY) and 281–301 (AITGWISTSLVPVSAAISMGM). Ser194 lines the substrate pocket. The Proton acceptor role is filled by Tyr207.

It belongs to the short-chain dehydrogenases/reductases (SDR) family. 17-beta-HSD 3 subfamily.

The protein localises to the endoplasmic reticulum membrane. It carries out the reaction a very-long-chain (3R)-3-hydroxyacyl-CoA + NADP(+) = a very-long-chain 3-oxoacyl-CoA + NADPH + H(+). The enzyme catalyses 17beta-estradiol + NAD(+) = estrone + NADH + H(+). The catalysed reaction is 17beta-estradiol + NADP(+) = estrone + NADPH + H(+). It functions in the pathway lipid metabolism; fatty acid biosynthesis. Its pathway is steroid biosynthesis; estrogen biosynthesis. Catalyzes the second of the four reactions of the long-chain fatty acids elongation cycle. This endoplasmic reticulum-bound enzymatic process, allows the addition of two carbons to the chain of long- and very long-chain fatty acids/VLCFAs per cycle. This enzyme has a 3-ketoacyl-CoA reductase activity, reducing 3-ketoacyl-CoA to 3-hydroxyacyl-CoA, within each cycle of fatty acid elongation. Thereby, it may participate in the production of VLCFAs of different chain lengths that are involved in multiple biological processes as precursors of membrane lipids and lipid mediators. May also catalyze the transformation of estrone (E1) into estradiol (E2) and play a role in estrogen formation. The chain is Very-long-chain 3-oxoacyl-CoA reductase-B (hsd17b12-b) from Xenopus laevis (African clawed frog).